The following is a 417-amino-acid chain: Autophagy-related protein 18 (417 aa).

WD repeat units follow at residues 1 to 36, 69 to 114, 139 to 182, 185 to 225, 230 to 269, 312 to 358, and 370 to 410; these read MAMN…KSYE, KRQS…LLYT, PLPQ…AINV, AHRS…KLYQ, SMPS…SSSR, KHNG…AWIK, and GNNG…GGEG. The short motif at 226–230 is the L/FRRG motif element; the sequence is FRRGS. The tract at residues 261–314 is disordered; that stretch reads LSQQTSSSRDTSPSSSTPAGRDRAFSQSSLGHSPDRSDVSGEPDSSEFPARKHN. Positions 262 to 278 are enriched in low complexity; that stretch reads SQQTSSSRDTSPSSSTP.

It belongs to the WD repeat PROPPIN family. As to quaternary structure, component of the PI(3,5)P2 regulatory complex.

The protein localises to the preautophagosomal structure membrane. It localises to the vacuole membrane. Its subcellular location is the endosome membrane. In terms of biological role, the PI(3,5)P2 regulatory complex regulates both the synthesis and turnover of phosphatidylinositol 3,5-bisphosphate (PtdIns(3,5)P2). Necessary for proper vacuole morphology. Plays an important role in osmotically-induced vacuole fragmentation. Required for cytoplasm to vacuole transport (Cvt) vesicle formation, pexophagy and starvation-induced autophagy. Involved in correct atg9 trafficking to the pre-autophagosomal structure. Might also be involved in premeiotic DNA replication. This chain is Autophagy-related protein 18 (atg18), found in Aspergillus clavatus (strain ATCC 1007 / CBS 513.65 / DSM 816 / NCTC 3887 / NRRL 1 / QM 1276 / 107).